Consider the following 147-residue polypeptide: Large ribosomal subunit protein bL9 (147 aa).

It belongs to the bacterial ribosomal protein bL9 family.

Its function is as follows. Binds to the 23S rRNA. The sequence is that of Large ribosomal subunit protein bL9 from Campylobacter lari (strain RM2100 / D67 / ATCC BAA-1060).